Here is a 249-residue protein sequence, read N- to C-terminus: Ditrans,polycis-undecaprenyl-diphosphate synthase ((2E,6E)-farnesyl-diphosphate specific) (249 aa).

Aspartate 26 is an active-site residue. Aspartate 26 is a Mg(2+) binding site. Residues glycine 27–arginine 30, tryptophan 31, arginine 39, histidine 43, and serine 71–glutamate 73 contribute to the substrate site. Asparagine 74 serves as the catalytic Proton acceptor. Substrate contacts are provided by residues tryptophan 75, arginine 77, arginine 194, and arginine 200–serine 202. Position 213 (glutamate 213) interacts with Mg(2+).

The protein belongs to the UPP synthase family. In terms of assembly, homodimer. Mg(2+) is required as a cofactor.

It catalyses the reaction 8 isopentenyl diphosphate + (2E,6E)-farnesyl diphosphate = di-trans,octa-cis-undecaprenyl diphosphate + 8 diphosphate. In terms of biological role, catalyzes the sequential condensation of isopentenyl diphosphate (IPP) with (2E,6E)-farnesyl diphosphate (E,E-FPP) to yield (2Z,6Z,10Z,14Z,18Z,22Z,26Z,30Z,34E,38E)-undecaprenyl diphosphate (di-trans,octa-cis-UPP). UPP is the precursor of glycosyl carrier lipid in the biosynthesis of bacterial cell wall polysaccharide components such as peptidoglycan and lipopolysaccharide. In Buchnera aphidicola subsp. Schizaphis graminum (strain Sg), this protein is Ditrans,polycis-undecaprenyl-diphosphate synthase ((2E,6E)-farnesyl-diphosphate specific).